The primary structure comprises 332 residues: Anthranilate phosphoribosyltransferase (332 aa).

5-phospho-alpha-D-ribose 1-diphosphate is bound by residues G79, 82–83 (GD), S87, 89–92 (NIST), 107–115 (KHGNRSVSS), and S119. Position 79 (G79) interacts with anthranilate. Position 91 (S91) interacts with Mg(2+). Position 110 (N110) interacts with anthranilate. Residue R165 coordinates anthranilate. Mg(2+)-binding residues include D223 and E224.

It belongs to the anthranilate phosphoribosyltransferase family. As to quaternary structure, homodimer. It depends on Mg(2+) as a cofactor.

The enzyme catalyses N-(5-phospho-beta-D-ribosyl)anthranilate + diphosphate = 5-phospho-alpha-D-ribose 1-diphosphate + anthranilate. It participates in amino-acid biosynthesis; L-tryptophan biosynthesis; L-tryptophan from chorismate: step 2/5. Its function is as follows. Catalyzes the transfer of the phosphoribosyl group of 5-phosphorylribose-1-pyrophosphate (PRPP) to anthranilate to yield N-(5'-phosphoribosyl)-anthranilate (PRA). The protein is Anthranilate phosphoribosyltransferase of Yersinia pestis bv. Antiqua (strain Antiqua).